A 277-amino-acid chain; its full sequence is MAALGRPFSGLPLSGSADFLQSPPAFAGRAFPPGAAGHDLAPRPGVRGPPSSPDGRTARGRVSIHCRKKHKRLAEDDECPVRKKRLTEAELGAVADEWVLGTHQGIEGHGVNTCPGGLSVPSILDAVCEEMDQTTGEPQCEVARRRLQEIEDRIIDEDEEVESDRNVSHLPSLVLSDTMKTGLKREFDEVFTKKMIESMSRPSMELVLWKPLPELLSEKPKPSSNPKNYMGESQTKHTATGTAFPQRTEVLLEPQCTDTPLYHSLETAASTEEEMEL.

The tract at residues 22–69 is disordered; sequence SPPAFAGRAFPPGAAGHDLAPRPGVRGPPSSPDGRTARGRVSIHCRKK. Positions 23 to 55 are enriched in low complexity; it reads PPAFAGRAFPPGAAGHDLAPRPGVRGPPSSPDG. Position 47 is an omega-N-methylarginine (R47). S52 carries the post-translational modification Phosphoserine. Residues 58–69 show a composition bias toward basic residues; it reads ARGRVSIHCRKK. A coiled-coil region spans residues 139–166; sequence QCEVARRRLQEIEDRIIDEDEEVESDRN. Disordered regions lie at residues 216–242 and 255–277; these read LSEK…ATGT and QCTD…EMEL. The span at 225 to 242 shows a compositional bias: polar residues; sequence NPKNYMGESQTKHTATGT.

In terms of assembly, interacts with CIAO2B; the interaction is direct. Interacts with MMS19; the interaction is indirect.

The protein localises to the cytoplasm. The protein resides in the cytoskeleton. Its subcellular location is the spindle. It is found in the nucleus. Its function is as follows. Facilitates DNA repair, cell cycle progression, and cell proliferation through its interaction with CIAO2B. The sequence is that of Coiled-coil domain-containing protein 117 from Rattus norvegicus (Rat).